The following is a 304-amino-acid chain: Coenzyme PQQ synthesis protein B (304 aa).

It belongs to the PqqB family.

The protein operates within cofactor biosynthesis; pyrroloquinoline quinone biosynthesis. Functionally, may be involved in the transport of PQQ or its precursor to the periplasm. The chain is Coenzyme PQQ synthesis protein B from Pseudomonas paraeruginosa (strain DSM 24068 / PA7) (Pseudomonas aeruginosa (strain PA7)).